Reading from the N-terminus, the 37-residue chain is Large ribosomal subunit protein bL36c (37 aa).

It belongs to the bacterial ribosomal protein bL36 family.

It is found in the plastid. The sequence is that of Large ribosomal subunit protein bL36c from Aneura mirabilis (Parasitic liverwort).